The chain runs to 612 residues: MDAQDIESRHPLIGARPRRRALRSLSILLAAALLLGLVLFYANGTGSGTAVDPVRVDNEFPWTNDMLAWQRCGFHFRTVRNYMNDPSGPMYYKGWYHLFYQHNKDFAYWGNITWGHAVSRDLINWQHLPVAVGPDHWYDISGVWTGSIIVVSEDRVVMLFTGGTKSFDQSINLAEAADPSDPLLLKWIKYDNNPILWPPPGIVRDDFRDPNPIWYNASESTYHIVVGSKNDSLQHTGIALVYLTKDFKKFDLLPTVLHSVDKVGMWECVEVYPVATTGPLLHKAIDNFDVDRVLDRSTVKHVLKASMNDEWHDYYAIGTFDPIGNKWTPDDETVDVGIGLRYDWGKFYASRTFFDPLKQRRIIWGYIGEVDSQKADIAKGWASLQGIPRSVLYDVKTGTNVLTWPIEEMEGLRMARKDFSGIKIKKGSTVELSDFGDAFQIDIEAEFTISKEALEATIEADVGYNCSSSGGAAIRGTLGPFGLLVLANQDLTENTATYFYVSKGIDGSLITHFCQDETRSSKANDIVKRVVGGTVPVLDGETFAVRILVDHSVIESFAMGGRTSATSRAYPTEAINSAARVFLFNNATGVDVIAESVKIWQMNSTYNDFYHF.

Residues 1-24 (MDAQDIESRHPLIGARPRRRALRS) lie on the Cytoplasmic side of the membrane. A helical; Signal-anchor for type II membrane protein transmembrane segment spans residues 25–45 (LSILLAAALLLGLVLFYANGT). Over 46–612 (GSGTAVDPVR…NSTYNDFYHF (567 aa)) the chain is Vacuolar. Substrate is bound by residues 82-85 (YMND), Q101, and W109. D85 is an active-site residue. Residue N111 is glycosylated (N-linked (GlcNAc...) asparagine). Residues 144-145 (WT) and 208-209 (RD) each bind substrate. N216 and N230 each carry an N-linked (GlcNAc...) asparagine glycan. E267 lines the substrate pocket. Residue N465 is glycosylated (N-linked (GlcNAc...) asparagine). Residues C466 and C514 are joined by a disulfide bond. 2 N-linked (GlcNAc...) asparagine glycosylation sites follow: N586 and N603.

The protein belongs to the glycosyl hydrolase 32 family. In terms of processing, might be processed in two N-terminal and C-terminal proteolytic fragments.

The protein resides in the vacuole membrane. The enzyme catalyses [1-beta-D-fructofuranosyl-(2-&gt;1)-]m+1 alpha-D-glucopyranoside + [1-beta-D-fructofuranosyl-(2-&gt;1)-]n+1 alpha-D-glucopyranoside = [1-beta-D-fructofuranosyl-(2-&gt;1)-]m alpha-D-glucopyranoside + [1-beta-D-fructofuranosyl-(2-&gt;1)-]n+1 beta-D-fructofuranosyl-(2-&gt;6)-alpha-D-glucopyranoside (m &gt; 0, n &gt;= 0).. It catalyses the reaction [beta-D-fructosyl-(2-&gt;1)-]m + [beta-D-fructosyl-(2-&gt;1)-]n = [beta-D-fructosyl-(2-&gt;1)-]m-1 + [beta-D-fructosyl-(2-&gt;1)-]n+1.. Functionally, involved in the synthesis of fructan of the inulin neoseries. Catalyzes a self-transfer between identical oligosaccharides of the 1-kestose series. This is Bifunctional 6(G)-fructosyltransferase/2,1-fructan:2,1-fructan 1-fructosyltransferase from Allium cepa (Onion).